A 628-amino-acid chain; its full sequence is MBT domain-containing protein 1 (628 aa).

Positions 1–31 are disordered; that stretch reads MFDGYDSCSEDTSSSSSSEESEEEVAPLPSN. The segment at 45–80 adopts an FCS-type zinc-finger fold; sequence PDGKSGMATCEMCGMVGVRDAFYSKTKRFCSVSCSR. 4 residues coordinate Zn(2+): C54, C57, C74, and C78. K115 bears the N6-acetyllysine mark. MBT repeat units follow at residues 141–245, 253–350, 351–456, and 464–560; these read FSWG…LVPP, TNWK…IGHR, FKRS…LTPP, and FKWF…LQPP. Disordered regions lie at residues 560-590 and 606-628; these read PASQSSRENQSASSKQKKKAKSQQYKGHKKM and NFLQGASDQESNGSANFYIKQEP. Residues 562-573 are compositionally biased toward low complexity; the sequence is SQSSRENQSASS. A compositionally biased stretch (basic residues) spans 574–590; sequence KQKKKAKSQQYKGHKKM. Positions 609–620 are enriched in polar residues; it reads QGASDQESNGSA.

In terms of assembly, monomer. Component of the NuA4 histone acetyltransferase complex. Interacts with EPC1; interaction is direct and promotes recruitment of MBTD1 into the NuA4 histone acetyltransferase complex.

It is found in the nucleus. The protein resides in the chromosome. Functionally, chromatin reader component of the NuA4 histone acetyltransferase complex, a multiprotein complex involved in transcriptional activation of select genes principally by acetylation of nucleosomal histones H4 and H2A. The NuA4 complex plays a direct role in repair of DNA double-strand breaks (DSBs) by promoting homologous recombination (HR). MBTD1 specifically recognizes and binds monomethylated and dimethylated 'Lys-20' on histone H4 (H4K20me1 and H4K20me2, respectively). In the NuA4 complex, MBTD1 promotes recruitment of the complex to H4K20me marks by competing with TP53BP1 for binding to H4K20me. Following recruitment to H4K20me at DNA breaks, the NuA4 complex catalyzes acetylation of 'Lys-15' on histone H2A (H2AK15), blocking the ubiquitination mark required for TP53BP1 localization at DNA breaks, thereby promoting homologous recombination (HR). The polypeptide is MBT domain-containing protein 1 (Homo sapiens (Human)).